A 796-amino-acid polypeptide reads, in one-letter code: MNIQHKEDTLIVQTGGNYKYYSVPVCVDSIDLTTEIARSEEKLLTGPSKHVEDPSYIESLFKNLYLNAPEYLKCQERCFLILKRLLLGPTSVPCAVETWDKMDYMNENPITTQNGTLYVYKKCCKCPNNCLFNCTVLTNYGTSHVFRGLLSLKKWETDTEPMICFCNRAVPNSEYIAVIFPGEQKITLDMYPHLLNILTRYISICDIDTITNDLIIELGSSLTNRICIHYKFLFNYAYIAKDSFTFVPDMDKEVILLELNKLIMTVECCTNFFFEKIWKRLSGDYDKYVTLLTLDASACPIIQTGTMREIKHLAAMLNVGLSYGKQKILKCSLQFQKRFIGFSEDDVIWRNLFLIYFNVNYPHHEETSPVKVPVQSSVKYHILLQRLLKNKRADEHETIVDRFVCGGMLNKRSTESYGTWDRNVETSVPDEFNEVVTIRDDAFCVNAFNTNRVINVRSINKKHVTTAPSCLTFNFVTDKYIFKEPACTISTFGTSGNTLQSLNINMKGSYVEFIYMLNVYRLHTNTFKFLLPATVCNSNSSLDIHGLLNQEVMRSDRNAVFWTTNFPCMITNINKINMGWFKAATAIVPKVHGDELRTVIKKEINFLKTSPSVNFDPFLHNMFVELELRNRCQIPLMNKQLVLTLYICLCMSNKCEISGIQKYLMTLVSEGVFDYSKNMLAHTKVKHVCAIAGSRVCNNVPKILHNKKKVKLDSFGRNANLLTFFGHLNVNELTDRQLSTIVKILIFYVQNIKHRGGICLLKRIIRKFLNSRVNKKLNGYDCRNNSTNNEHCRYPT.

This sequence belongs to the herpesviridae UL87 family.

This Elephas maximus (Indian elephant) protein is Protein U58.